Here is a 506-residue protein sequence, read N- to C-terminus: Anaerobic nitric oxide reductase transcription regulator NorR (506 aa).

D57 is modified (4-aspartylphosphate). The 230-residue stretch at 187–416 (MIGLSPAMTQ…LEHAIHRAVV (230 aa)) folds into the Sigma-54 factor interaction domain. ATP contacts are provided by residues 215–222 (GETGTGKE) and 278–287 (ADNGTLFLDE). The segment at residues 481–500 (WAASARALETDVANLHRLAK) is a DNA-binding region (H-T-H motif).

Its pathway is nitrogen metabolism; nitric oxide reduction. Its function is as follows. Required for the expression of anaerobic nitric oxide (NO) reductase, acts as a transcriptional activator for at least the norVW operon. Activation also requires sigma-54. This chain is Anaerobic nitric oxide reductase transcription regulator NorR, found in Salmonella newport (strain SL254).